A 698-amino-acid polypeptide reads, in one-letter code: Polyribonucleotide nucleotidyltransferase (698 aa).

Asp490 and Asp496 together coordinate Mg(2+). Positions 557–616 (PKVVTMTIKPDKIRDVIGPGGKKINEIIDETGVKLDIEQDGTIFIGAVDQAMINRAREII) constitute a KH domain. In terms of domain architecture, S1 motif spans 626-694 (GQTYQATVKR…KQGRVNASHR (69 aa)).

The protein belongs to the polyribonucleotide nucleotidyltransferase family. The cofactor is Mg(2+).

It localises to the cytoplasm. It carries out the reaction RNA(n+1) + phosphate = RNA(n) + a ribonucleoside 5'-diphosphate. Functionally, involved in mRNA degradation. Catalyzes the phosphorolysis of single-stranded polyribonucleotides processively in the 3'- to 5'-direction. The protein is Polyribonucleotide nucleotidyltransferase of Staphylococcus aureus (strain MRSA252).